We begin with the raw amino-acid sequence, 980 residues long: Hypoxia up-regulated protein 1 (980 aa).

The N-terminal stretch at 1–24 (MREKLSLWAIFCLVVAFLPSQTES) is a signal peptide. 2 disordered regions span residues 558–682 (EEES…DIAV) and 894–980 (KPKP…EDEL). Basic and acidic residues-rich tracts occupy residues 599–656 (AGKE…PEEK) and 896–906 (KPKDKAKDKNS). Residues 907-916 (TSESSKANST) are compositionally biased toward polar residues. Composition is skewed to basic and acidic residues over residues 918–949 (DAEK…KAEE) and 960–980 (TDDK…EDEL). Residues 977–980 (EDEL) carry the Prevents secretion from ER motif.

The protein belongs to the heat shock protein 70 family.

It localises to the endoplasmic reticulum lumen. Has a pivotal role in cytoprotective cellular mechanisms triggered by oxygen deprivation. May play a role as a molecular chaperone and participate in protein folding. The polypeptide is Hypoxia up-regulated protein 1 (hyou1) (Danio rerio (Zebrafish)).